A 428-amino-acid chain; its full sequence is Histidinol dehydrogenase (428 aa).

Substrate is bound by residues S234, Q256, and H259. Residues Q256 and H259 each coordinate Zn(2+). Catalysis depends on proton acceptor residues E324 and H325. Substrate contacts are provided by H325, D358, E412, and H417. D358 contacts Zn(2+). H417 contributes to the Zn(2+) binding site.

It belongs to the histidinol dehydrogenase family. It depends on Zn(2+) as a cofactor.

It carries out the reaction L-histidinol + 2 NAD(+) + H2O = L-histidine + 2 NADH + 3 H(+). It functions in the pathway amino-acid biosynthesis; L-histidine biosynthesis; L-histidine from 5-phospho-alpha-D-ribose 1-diphosphate: step 9/9. Functionally, catalyzes the sequential NAD-dependent oxidations of L-histidinol to L-histidinaldehyde and then to L-histidine. The protein is Histidinol dehydrogenase of Pelagibacter ubique (strain HTCC1062).